Consider the following 434-residue polypeptide: Methylenetetrahydrofolate--tRNA-(uracil-5-)-methyltransferase TrmFO (434 aa).

10 to 15 serves as a coordination point for FAD; it reads GAGLAG.

The protein belongs to the MnmG family. TrmFO subfamily. The cofactor is FAD.

It localises to the cytoplasm. The enzyme catalyses uridine(54) in tRNA + (6R)-5,10-methylene-5,6,7,8-tetrahydrofolate + NADH + H(+) = 5-methyluridine(54) in tRNA + (6S)-5,6,7,8-tetrahydrofolate + NAD(+). It catalyses the reaction uridine(54) in tRNA + (6R)-5,10-methylene-5,6,7,8-tetrahydrofolate + NADPH + H(+) = 5-methyluridine(54) in tRNA + (6S)-5,6,7,8-tetrahydrofolate + NADP(+). Catalyzes the folate-dependent formation of 5-methyl-uridine at position 54 (M-5-U54) in all tRNAs. This is Methylenetetrahydrofolate--tRNA-(uracil-5-)-methyltransferase TrmFO from Bacillus cereus (strain ATCC 14579 / DSM 31 / CCUG 7414 / JCM 2152 / NBRC 15305 / NCIMB 9373 / NCTC 2599 / NRRL B-3711).